A 247-amino-acid polypeptide reads, in one-letter code: Putative trypsin-6 (247 aa).

The signal sequence occupies residues 1–15 (MNPLLILAFVGAAVA). One can recognise a Peptidase S1 domain in the interval 24–244 (IVGGYTCEEN…YVDWIKDTIA (221 aa)). A disulfide bridge links C48 with C64. H63 acts as the Charge relay system in catalysis. Residues E75, N77, V80, and E85 each contribute to the Ca(2+) site. D107 acts as the Charge relay system in catalysis. 3 cysteine pairs are disulfide-bonded: C139-C206, C171-C185, and C196-C220. Catalysis depends on S200, which acts as the Charge relay system.

Belongs to the peptidase S1 family. Tryptase subfamily. As to expression, overexpressed in metastasing in non small cell lung tumors, leading to an enhanced cell migration.

It is found in the secreted. It catalyses the reaction Preferential cleavage: Arg-|-Xaa, Lys-|-Xaa.. In terms of biological role, may regulate cell migration. This chain is Putative trypsin-6 (PRSS3P2), found in Homo sapiens (Human).